The sequence spans 45 residues: Putative UPF0377 protein YJL222W-B (45 aa).

Belongs to the UPF0377 family.

The sequence is that of Putative UPF0377 protein YJL222W-B from Saccharomyces cerevisiae (strain ATCC 204508 / S288c) (Baker's yeast).